The following is a 588-amino-acid chain: Pleckstrin homology domain-containing family A member 4 (588 aa).

The PH domain maps to 54-153 (PVHIRGWLHK…WLRALGRASR (100 aa)). Disordered stretches follow at residues 155–349 (EGED…QASM) and 495–588 (AGLG…VDHL). Residue serine 164 is modified to Phosphoserine. Over residues 183-193 (VNRREEGRISE) the composition is skewed to basic and acidic residues. Polar residues predominate over residues 211–222 (TPNSTVDLQTDT). Low complexity-rich tracts occupy residues 246–260 (PRPR…PLSA) and 321–334 (QRTQ…GSST). Serine 562 bears the Phosphoserine mark.

It is found in the cytoplasm. The protein localises to the membrane. Functionally, binds specifically to phosphatidylinositol 3-phosphate (PtdIns3P), but not to other phosphoinositides. The polypeptide is Pleckstrin homology domain-containing family A member 4 (Plekha4) (Mus musculus (Mouse)).